The chain runs to 236 residues: ATP synthase subunit a (236 aa).

The next 5 membrane-spanning stretches (helical) occupy residues 17–37 (WTNL…LFGL), 76–96 (SFFV…GLII), 113–133 (PVVT…AGVA), 170–190 (IFGN…MAFS), and 196–216 (MIVS…IGAI).

Belongs to the ATPase A chain family. F-type ATPases have 2 components, CF(1) - the catalytic core - and CF(0) - the membrane proton channel. CF(1) has five subunits: alpha(3), beta(3), gamma(1), delta(1), epsilon(1). CF(0) has three main subunits: a(1), b(2) and c(9-12). The alpha and beta chains form an alternating ring which encloses part of the gamma chain. CF(1) is attached to CF(0) by a central stalk formed by the gamma and epsilon chains, while a peripheral stalk is formed by the delta and b chains.

It localises to the cell membrane. In terms of biological role, key component of the proton channel; it plays a direct role in the translocation of protons across the membrane. The polypeptide is ATP synthase subunit a (Limosilactobacillus fermentum (strain NBRC 3956 / LMG 18251) (Lactobacillus fermentum)).